Here is a 62-residue protein sequence, read N- to C-terminus: Agnoprotein (62 aa).

Over Met-1 to Lys-23 the chain is Cytoplasmic. Residues Thr-24–Cys-40 traverse the membrane as a helical; Signal-anchor for type II membrane protein segment. The Extracellular portion of the chain corresponds to Glu-41–Ser-62.

Belongs to the polyomaviruses agnoprotein family. Homooligomer. Interacts with VP1. Interacts with large T antigen; this interaction may impact upon the activity of T-antigen on the control of viral gene transcription and replication. Interacts with small t antigen. Interacts with host CBX5; this interaction induces the dissociation of CBX5 from LBR, resulting in destabilization of the nuclear envelope. Post-translationally, phosphorylated by host kinase. Phosphorylation segregates agnoprotein in cytoplasm, whereas unphosphorylated agnoprotein migrate to the nucleus.

It is found in the host cytoplasm. It localises to the host nucleus membrane. The protein localises to the host rough endoplasmic reticulum membrane. The protein resides in the host cell membrane. In terms of biological role, alters the structure of the nuclear envelope by interacting with host CBX5 and disrupting CBX5 association with LBR. Involved in the perinuclear-nuclear localization of the capsid protein VP1 during virion assembly and maturation. Plays an important role in the release of progeny virions from infected cells and in viral propagation, probably by acting as a viral ionic channel in the host plasma membrane. Allows influx of extracellular calcium ions in the host cell. May contribute to viral genome transcription and translation of viral late proteins. This Simian virus 40 (SV40) protein is Agnoprotein.